We begin with the raw amino-acid sequence, 274 residues long: Type III pantothenate kinase (274 aa).

ATP is bound at residue 6–13 (DVGNTNTV). Residues Tyr-110 and 117–120 (GADR) contribute to the substrate site. Asp-119 functions as the Proton acceptor in the catalytic mechanism. Asp-139 serves as a coordination point for K(+). Position 142 (Thr-142) interacts with ATP. Residue Thr-194 participates in substrate binding.

The protein belongs to the type III pantothenate kinase family. As to quaternary structure, homodimer. NH4(+) is required as a cofactor. Requires K(+) as cofactor.

It is found in the cytoplasm. It catalyses the reaction (R)-pantothenate + ATP = (R)-4'-phosphopantothenate + ADP + H(+). The protein operates within cofactor biosynthesis; coenzyme A biosynthesis; CoA from (R)-pantothenate: step 1/5. In terms of biological role, catalyzes the phosphorylation of pantothenate (Pan), the first step in CoA biosynthesis. This is Type III pantothenate kinase from Koribacter versatilis (strain Ellin345).